We begin with the raw amino-acid sequence, 117 residues long: Probable non-functional immunoglobulin heavy variable 7-81 (117 aa).

An N-terminal signal peptide occupies residues 1 to 19 (MDWTWSILFLVAAATGTYS). The interval 20–44 (QVQLVQSGHEVKQPGASVKVSCKAS) is framework-1. The Ig-like domain maps to 20-117 (QVQLVQSGHE…EDMAMYYCAR (98 aa)). A disulfide bond links Cys-41 and Cys-115. Positions 45 to 52 (GYSFTTYG) are complementarity-determining-1. The framework-2 stretch occupies residues 53 to 69 (MNWVPQAPGQGLEWMGW). The tract at residues 70-77 (FNTYTGNP) is complementarity-determining-2. N-linked (GlcNAc...) asparagine glycosylation is present at Asn-76. The segment at 78-115 (TYAQGFTGRFVFSMDTSASTAYLQISSLKAEDMAMYYC) is framework-3. A complementarity-determining-3 region spans residues 116–117 (AR).

Immunoglobulins are composed of two identical heavy chains and two identical light chains; disulfide-linked.

It localises to the secreted. Its subcellular location is the cell membrane. Probable non-functional open reading frame (ORF) of V region of the variable domain of immunoglobulin heavy chains. Non-functional ORF generally cannot participate in the synthesis of a productive immunoglobulin chain due to altered V-(D)-J or switch recombination and/or splicing site (at mRNA level) and/or conserved amino acid change (protein level). Immunoglobulins, also known as antibodies, are membrane-bound or secreted glycoproteins produced by B lymphocytes. In the recognition phase of humoral immunity, the membrane-bound immunoglobulins serve as receptors which, upon binding of a specific antigen, trigger the clonal expansion and differentiation of B lymphocytes into immunoglobulins-secreting plasma cells. Secreted immunoglobulins mediate the effector phase of humoral immunity, which results in the elimination of bound antigens. The antigen binding site is formed by the variable domain of one heavy chain, together with that of its associated light chain. Thus, each immunoglobulin has two antigen binding sites with remarkable affinity for a particular antigen. The variable domains are assembled by a process called V-(D)-J rearrangement and can then be subjected to somatic hypermutations which, after exposure to antigen and selection, allow affinity maturation for a particular antigen. In Homo sapiens (Human), this protein is Probable non-functional immunoglobulin heavy variable 7-81.